A 49-amino-acid polypeptide reads, in one-letter code: Defensin-like protein 1 (49 aa).

4 disulfide bridges follow: Cys-3/Cys-49, Cys-14/Cys-35, Cys-20/Cys-43, and Cys-24/Cys-45.

The protein belongs to the DEFL family.

The protein resides in the secreted. Functionally, possesses antimicrobial activity sensitive to inorganic cations. Binds specifically to the fungal plasma membrane. Has no inhibitory effect on insect gut alpha-amylase. The sequence is that of Defensin-like protein 1 from Clitoria ternatea (Butterfly pea).